The primary structure comprises 322 residues: Tetraacyldisaccharide 4'-kinase (322 aa).

54–61 (SVGGTGKT) is an ATP binding site.

Belongs to the LpxK family.

The enzyme catalyses a lipid A disaccharide + ATP = a lipid IVA + ADP + H(+). It participates in glycolipid biosynthesis; lipid IV(A) biosynthesis; lipid IV(A) from (3R)-3-hydroxytetradecanoyl-[acyl-carrier-protein] and UDP-N-acetyl-alpha-D-glucosamine: step 6/6. In terms of biological role, transfers the gamma-phosphate of ATP to the 4'-position of a tetraacyldisaccharide 1-phosphate intermediate (termed DS-1-P) to form tetraacyldisaccharide 1,4'-bis-phosphate (lipid IVA). In Francisella philomiragia subsp. philomiragia (strain ATCC 25017 / CCUG 19701 / FSC 153 / O#319-036), this protein is Tetraacyldisaccharide 4'-kinase.